The sequence spans 267 residues: Acyl-[acyl-carrier-protein]--UDP-N-acetylglucosamine O-acyltransferase (267 aa).

The protein belongs to the transferase hexapeptide repeat family. LpxA subfamily. In terms of assembly, homotrimer.

It localises to the cytoplasm. It catalyses the reaction a (3R)-hydroxyacyl-[ACP] + UDP-N-acetyl-alpha-D-glucosamine = a UDP-3-O-[(3R)-3-hydroxyacyl]-N-acetyl-alpha-D-glucosamine + holo-[ACP]. It participates in glycolipid biosynthesis; lipid IV(A) biosynthesis; lipid IV(A) from (3R)-3-hydroxytetradecanoyl-[acyl-carrier-protein] and UDP-N-acetyl-alpha-D-glucosamine: step 1/6. Functionally, involved in the biosynthesis of lipid A, a phosphorylated glycolipid that anchors the lipopolysaccharide to the outer membrane of the cell. In Cupriavidus necator (strain ATCC 17699 / DSM 428 / KCTC 22496 / NCIMB 10442 / H16 / Stanier 337) (Ralstonia eutropha), this protein is Acyl-[acyl-carrier-protein]--UDP-N-acetylglucosamine O-acyltransferase.